The primary structure comprises 250 residues: Vacuolar iron transporter 1 (250 aa).

At 1-37 the chain is on the cytoplasmic side; the sequence is MSSEEDKITRISIEPEKQTLLDHHTEKHFTAGEIVRD. Residues 38–58 form a helical membrane-spanning segment; it reads IIIGVSDGLTVPFALAAGLSG. At 59 to 64 the chain is on the vacuolar side; the sequence is ANASSS. Residues 65 to 85 traverse the membrane as a helical segment; it reads IVLTAGIAEVAAGAISMGLGG. Residues 86 to 169 are Cytoplasmic-facing; it reads YLAAKSEEDH…PDPKRALQSA (84 aa). Positions 91 to 166 are cytoplasmic metal binding domain (MBD); it reads SEEDHYAREM…LEKPDPKRAL (76 aa). The Fe cation site is built by Glu-103, Glu-106, Glu-114, Glu-117, Met-150, and Glu-154. The chain crosses the membrane as a helical span at residues 170–190; it reads FTIAIAYVLGGFIPLLPYMLI. At 191–192 the chain is on the vacuolar side; sequence PH. A helical transmembrane segment spans residues 193–213; the sequence is AMDAVVASVVITLFALFIFGY. Residues 214–227 are Cytoplasmic-facing; the sequence is AKGHFTGSKPLRSA. A helical membrane pass occupies residues 228 to 248; the sequence is FETAFIGAIASAAAFCLAKVV. At 249–250 the chain is on the vacuolar side; sequence QH.

The protein belongs to the CCC1 family. As to quaternary structure, homodimer. The dimeric interaction is mediated by both the transmembrane domains (TMDs) and the cytoplasmic metal binding domain (MBD). Highly expressed in developing embryo and seed. Expressed in young seedlings, predominantly in the vasculature.

Its subcellular location is the vacuole membrane. It catalyses the reaction Fe(2+)(in) = Fe(2+)(out). Vacuolar iron transporter involved in the transfer of iron ions from the cytosol to the vacuole for intracellular iron storage. Involved in regulation of cellular iron homeostasis. Vacuolar iron storage is required for seed embryo and seedling development. In Arabidopsis thaliana (Mouse-ear cress), this protein is Vacuolar iron transporter 1.